The sequence spans 322 residues: Pyridoxal kinase (322 aa).

Residue M1 is modified to N-acetylmethionine. 2 residues coordinate pyridoxal: S22 and T57. Residue T57 participates in pyridoxal 5'-phosphate binding. S69 carries the post-translational modification Phosphoserine. Residue D123 participates in ATP binding. Residue D123 coordinates Na(+). Position 128 (D128) interacts with Mg(2+). Residue T158 participates in Na(+) binding. An ATP-binding site is contributed by 160 to 163 (NQFE). A Phosphoserine modification is found at S174. Na(+) is bound at residue T196. 196–197 (TS) provides a ligand contact to ATP. S223 carries the post-translational modification Phosphoserine. Residues 236 to 238 (VDA) and T243 each bind ATP. 244-245 (GD) contributes to the pyridoxal 5'-phosphate binding site. Catalysis depends on D245, which acts as the Proton acceptor. S295 bears the Phosphoserine mark.

The protein belongs to the pyridoxine kinase family. Homodimer. Zn(2+) serves as cofactor. It depends on Mg(2+) as a cofactor. In terms of processing, the N-terminus is blocked.

The protein localises to the cytoplasm. It is found in the cytosol. The enzyme catalyses pyridoxal + ATP = pyridoxal 5'-phosphate + ADP + H(+). It catalyses the reaction pyridoxamine + ATP = pyridoxamine 5'-phosphate + ADP + H(+). The catalysed reaction is pyridoxine + ATP = pyridoxine 5'-phosphate + ADP + H(+). The protein operates within cofactor metabolism; pyridoxal 5'-phosphate salvage; pyridoxal 5'-phosphate from pyridoxal: step 1/1. Its pathway is cofactor metabolism; pyridoxal 5'-phosphate salvage; pyridoxine 5'-phosphate from pyridoxine: step 1/1. It functions in the pathway cofactor metabolism; pyridoxal 5'-phosphate salvage; pyridoxamine 5'-phosphate from pyridoxamine: step 1/1. Activity is increased in the presence of K(+)or Na(+). Catalyzes the phosphorylation of the dietary vitamin B6 vitamers pyridoxal (PL), pyridoxine (PN) and pyridoxamine (PM) to form pyridoxal 5'-phosphate (PLP), pyridoxine 5'-phosphate (PNP) and pyridoxamine 5'-phosphate (PMP), respectively. PLP is the active form of vitamin B6, and acts as a cofactor for over 140 different enzymatic reactions. In Sus scrofa (Pig), this protein is Pyridoxal kinase (PDXK).